We begin with the raw amino-acid sequence, 270 residues long: 4-hydroxy-tetrahydrodipicolinate reductase (270 aa).

Residues 9-14 and glutamate 35 each bind NAD(+); that span reads GAGGRM. NADP(+) is bound at residue arginine 36. NAD(+) contacts are provided by residues 99 to 101 and 123 to 126; these read GTT and ASNF. The Proton donor/acceptor role is filled by histidine 156. Position 157 (histidine 157) interacts with (S)-2,3,4,5-tetrahydrodipicolinate. The active-site Proton donor is the lysine 160. 166 to 167 contacts (S)-2,3,4,5-tetrahydrodipicolinate; that stretch reads GT.

Belongs to the DapB family.

It is found in the cytoplasm. It carries out the reaction (S)-2,3,4,5-tetrahydrodipicolinate + NAD(+) + H2O = (2S,4S)-4-hydroxy-2,3,4,5-tetrahydrodipicolinate + NADH + H(+). The enzyme catalyses (S)-2,3,4,5-tetrahydrodipicolinate + NADP(+) + H2O = (2S,4S)-4-hydroxy-2,3,4,5-tetrahydrodipicolinate + NADPH + H(+). The protein operates within amino-acid biosynthesis; L-lysine biosynthesis via DAP pathway; (S)-tetrahydrodipicolinate from L-aspartate: step 4/4. Its function is as follows. Catalyzes the conversion of 4-hydroxy-tetrahydrodipicolinate (HTPA) to tetrahydrodipicolinate. The protein is 4-hydroxy-tetrahydrodipicolinate reductase of Haemophilus influenzae (strain 86-028NP).